Here is a 172-residue protein sequence, read N- to C-terminus: Cytochrome c oxidase subunit 4 isoform 2, mitochondrial (172 aa).

A mitochondrion-targeting transit peptide spans 1–18; that stretch reads MFSRATRSLVMKTGGLRT. The tract at residues 1 to 33 is disordered; it reads MFSRATRSLVMKTGGLRTQGTHSPGSAASSSQR. Residues 16–33 are compositionally biased toward polar residues; that stretch reads LRTQGTHSPGSAASSSQR. Topologically, residues 19–101 are mitochondrial matrix; sequence QGTHSPGSAA…TFAEMNHRSN (83 aa). The chain crosses the membrane as a helical span at residues 102 to 127; the sequence is EWKTVMGCVFFFIGFTALVIWWQRVY. At 128-172 the chain is on the mitochondrial intermembrane side; that stretch reads VFPKKVVTLTEERKAQQLQRLLDMKSNPIQGLSAHWDYEKKEWKK.

Belongs to the cytochrome c oxidase IV family. As to quaternary structure, component of the cytochrome c oxidase (complex IV, CIV), a multisubunit enzyme composed of 14 subunits. The complex is composed of a catalytic core of 3 subunits MT-CO1, MT-CO2 and MT-CO3, encoded in the mitochondrial DNA, and 11 supernumerary subunits COX4I, COX5A, COX5B, COX6A, COX6B, COX6C, COX7A, COX7B, COX7C, COX8 and NDUFA4, which are encoded in the nuclear genome. The complex exists as a monomer or a dimer and forms supercomplexes (SCs) in the inner mitochondrial membrane with NADH-ubiquinone oxidoreductase (complex I, CI) and ubiquinol-cytochrome c oxidoreductase (cytochrome b-c1 complex, complex III, CIII), resulting in different assemblies (supercomplex SCI(1)III(2)IV(1) and megacomplex MCI(2)III(2)IV(2)). In terms of tissue distribution, highly expressed in lung.

It is found in the mitochondrion inner membrane. Its pathway is energy metabolism; oxidative phosphorylation. Its function is as follows. Component of the cytochrome c oxidase, the last enzyme in the mitochondrial electron transport chain which drives oxidative phosphorylation. The respiratory chain contains 3 multisubunit complexes succinate dehydrogenase (complex II, CII), ubiquinol-cytochrome c oxidoreductase (cytochrome b-c1 complex, complex III, CIII) and cytochrome c oxidase (complex IV, CIV), that cooperate to transfer electrons derived from NADH and succinate to molecular oxygen, creating an electrochemical gradient over the inner membrane that drives transmembrane transport and the ATP synthase. Cytochrome c oxidase is the component of the respiratory chain that catalyzes the reduction of oxygen to water. Electrons originating from reduced cytochrome c in the intermembrane space (IMS) are transferred via the dinuclear copper A center (CU(A)) of subunit 2 and heme A of subunit 1 to the active site in subunit 1, a binuclear center (BNC) formed by heme A3 and copper B (CU(B)). The BNC reduces molecular oxygen to 2 water molecules using 4 electrons from cytochrome c in the IMS and 4 protons from the mitochondrial matrix. The polypeptide is Cytochrome c oxidase subunit 4 isoform 2, mitochondrial (Cox4i2) (Rattus norvegicus (Rat)).